Reading from the N-terminus, the 197-residue chain is Phosphoheptose isomerase (197 aa).

Residues cysteine 40–glutamine 197 enclose the SIS domain. Asparagine 55–glycine 57 is a binding site for substrate. Zn(2+) is bound by residues histidine 64 and glutamate 68. Substrate contacts are provided by residues glutamate 68, asparagine 97–aspartate 98, serine 123–serine 125, serine 128, and glutamine 175. The Zn(2+) site is built by glutamine 175 and histidine 183.

It belongs to the SIS family. GmhA subfamily. In terms of assembly, homotetramer. The cofactor is Zn(2+).

The protein resides in the cytoplasm. It carries out the reaction 2 D-sedoheptulose 7-phosphate = D-glycero-alpha-D-manno-heptose 7-phosphate + D-glycero-beta-D-manno-heptose 7-phosphate. It participates in carbohydrate biosynthesis; D-glycero-D-manno-heptose 7-phosphate biosynthesis; D-glycero-alpha-D-manno-heptose 7-phosphate and D-glycero-beta-D-manno-heptose 7-phosphate from sedoheptulose 7-phosphate: step 1/1. It functions in the pathway capsule biogenesis; capsule polysaccharide biosynthesis. Functionally, catalyzes the isomerization of sedoheptulose 7-phosphate in D-glycero-D-manno-heptose 7-phosphate. The protein is Phosphoheptose isomerase (gmhA) of Burkholderia pseudomallei (strain K96243).